Consider the following 923-residue polypeptide: Protein dct-6 (923 aa).

Residues D312 to Q347 adopt a coiled-coil conformation.

In terms of biological role, may have a role in tumor suppression. The sequence is that of Protein dct-6 (dct-6) from Caenorhabditis elegans.